The primary structure comprises 1052 residues: Protein HelA (1052 aa).

Helical transmembrane passes span 14-34 (WFVLLFTLVIAILGVYNFQRL), 121-141 (LPPGVETTLGPISTGLGEIFM), 348-368 (GALLVCVILFLFLGNIRAALI), 369-389 (TAMVIPLSMLLTITGMVENQI), 393-413 (LMSLGALDFGLIVDGAVIIVE), 450-470 (SIFGVFIITVVYLPILTLTGV), 483-503 (IIALLASMLFALTFVPAAVAI), 537-557 (VVISAAVALVVVSLGIAFHLG), 878-898 (LQIVVPITLLGIFLLLFISFG), 903-923 (ALLVFTGIPLALTGGVFALWL), 934-954 (VGFIALSGVAVLNGLVMITFI), 979-999 (PVLMTALVASLGFVPMALATG), and 1011-1031 (VVIGGIISSTFLTLLVLPGLY).

It belongs to the resistance-nodulation-cell division (RND) (TC 2.A.6) family.

The protein resides in the cell inner membrane. Its function is as follows. Presumed to function with HelC and HelB in efflux of an unidentified substrate. This is Protein HelA (helA) from Legionella pneumophila.